A 937-amino-acid polypeptide reads, in one-letter code: Proprotein convertase subtilisin/kexin type 6 (937 aa).

Over residues 1 to 16 (MPPRAPPAPGPRPPPR) the composition is skewed to pro residues. The disordered stretch occupies residues 1 to 22 (MPPRAPPAPGPRPPPRAAGRHG). A signal peptide spans 1–45 (MPPRAPPAPGPRPPPRAAGRHGLSPLAPRPWRWLLLLALPAVCSA). Positions 46 to 132 (LPPPRPVYTN…QQEVKRRVKR (87 aa)) are excised as a propeptide. Residues 149–468 (MWYMHCADKN…FGLVDAEALV (320 aa)) enclose the Peptidase S8 domain. Residues D186 and H227 each act as charge relay system in the active site. N240 is a glycosylation site (N-linked (GlcNAc...) asparagine). S401 functions as the Charge relay system in the catalytic mechanism. In terms of domain architecture, P/Homo B spans 476–616 (AVPSQHMCVA…SLILYGTAEH (141 aa)). A Cell attachment site motif is present at residues 534-536 (RGD). Residues 621-656 (FSSHQSRSRMLELSVPEQEPLKAEGPPPQAETPEEE) are disordered. FU repeat units lie at residues 660-707 (TGVC…GYFG), 711-758 (ARRC…GLYA), 762-806 (QRLC…GTYF), 810-855 (LIRC…GFYP), and 863-911 (HKVC…ETFC). The CRM (Cys-rich motif) stretch occupies residues 680 to 898 (CLNCVHFSLG…GFTQLGTSCI (219 aa)). N882 and N900 each carry an N-linked (GlcNAc...) asparagine glycan. The region spanning 899 to 937 (TNHTCSNADETFCEMVKSNRLCERKLFIQFCCRTCLLAG) is the PLAC domain.

It belongs to the peptidase S8 family. In terms of assembly, the precursor protein seems to exist in the reticulum endoplasmic as both a monomer and a dimer-sized complex whereas mature form exists only as a monomer, suggesting that propeptide cleavage affects its tertiary or quaternary structure. Interacts (immature form including the propeptide) with RCN3; probably involved in the maturation and the secretion of PCSK6. The cofactor is Ca(2+). High expression in the anterior pituitary and in several brain regions, the atrium, and the ventricle.

Serine endoprotease that processes various proproteins by cleavage at paired basic amino acids, recognizing the RXXX[KR]R consensus motif. Likely functions in the constitutive secretory pathway, with unique restricted distribution in both neuroendocrine and non-neuroendocrine tissues. This Rattus norvegicus (Rat) protein is Proprotein convertase subtilisin/kexin type 6 (Pcsk6).